Reading from the N-terminus, the 134-residue chain is Small ribosomal subunit protein uS8c (134 aa).

This sequence belongs to the universal ribosomal protein uS8 family. As to quaternary structure, part of the 30S ribosomal subunit.

The protein resides in the plastid. Its subcellular location is the chloroplast. In terms of biological role, one of the primary rRNA binding proteins, it binds directly to 16S rRNA central domain where it helps coordinate assembly of the platform of the 30S subunit. The protein is Small ribosomal subunit protein uS8c (rps8) of Cucumis sativus (Cucumber).